A 329-amino-acid chain; its full sequence is GTPase Obg (329 aa).

The 159-residue stretch at 1-159 folds into the Obg domain; sequence MQFIDYAEIE…RWLRLELKLL (159 aa). The OBG-type G domain maps to 160–328; that stretch reads AEVGIIGLPN…LLQIVWQLLD (169 aa). GTP is bound by residues 166–173, 191–195, 213–216, 280–283, and 309–311; these read GLPNAGKS, FTTLV, DIPG, NKMD, and SGV. The Mg(2+) site is built by serine 173 and threonine 193.

Belongs to the TRAFAC class OBG-HflX-like GTPase superfamily. OBG GTPase family. In terms of assembly, monomer. Mg(2+) is required as a cofactor.

The protein localises to the cytoplasm. An essential GTPase which binds GTP, GDP and possibly (p)ppGpp with moderate affinity, with high nucleotide exchange rates and a fairly low GTP hydrolysis rate. Plays a role in control of the cell cycle, stress response, ribosome biogenesis and in those bacteria that undergo differentiation, in morphogenesis control. This is GTPase Obg from Rippkaea orientalis (strain PCC 8801 / RF-1) (Cyanothece sp. (strain PCC 8801)).